A 365-amino-acid polypeptide reads, in one-letter code: MNLAAMDPKNYDAQLQQKRIKLEKAFADFNPPALEVFASEPMHYRMRAEFRMWHQGDDLYYYMFDKALNAKVRCDQYLPAGLIINQMMAALIAELTPNPALRYRLFQVDFLSTLSGEILVSLLYHRQLDEEWREQATQLKAKLSAQFNVNIIGRARKQKIDLDKDFVVETLTVNEQVLHYKQIENSFTQPNAKVSVKMLEWAIDATKDSQGDLLELYCGNGNFTIALARNFNRVLATELAKPSVDAAQYNIDINHVDNVQIIRMSAEDFSDAMAKKRQFRRLEGIDLDSYDCNTIFVDPPRAGIDPETLKLIQGYERILYISCNPETLNDNLLTLGQTHKITRFALFDQFPYTDHMESGVLLVRK.

Residues Gln-189, Tyr-217, Asn-222, Glu-238, and Asp-298 each coordinate S-adenosyl-L-methionine. Cys-323 (nucleophile) is an active-site residue. Glu-357 acts as the Proton acceptor in catalysis.

This sequence belongs to the class I-like SAM-binding methyltransferase superfamily. RNA M5U methyltransferase family. TrmA subfamily.

The catalysed reaction is uridine(54) in tRNA + S-adenosyl-L-methionine = 5-methyluridine(54) in tRNA + S-adenosyl-L-homocysteine + H(+). It catalyses the reaction uridine(341) in tmRNA + S-adenosyl-L-methionine = 5-methyluridine(341) in tmRNA + S-adenosyl-L-homocysteine + H(+). Functionally, dual-specificity methyltransferase that catalyzes the formation of 5-methyluridine at position 54 (m5U54) in all tRNAs, and that of position 341 (m5U341) in tmRNA (transfer-mRNA). The sequence is that of tRNA/tmRNA (uracil-C(5))-methyltransferase from Shewanella frigidimarina (strain NCIMB 400).